The primary structure comprises 298 residues: Protease HtpX homolog (298 aa).

2 helical membrane passes run 14–34 (VVLL…AGYL) and 39–59 (YAMG…SMIF). His143 contacts Zn(2+). Glu144 is an active-site residue. His147 lines the Zn(2+) pocket. 2 consecutive transmembrane segments (helical) span residues 158 to 178 (IAVA…RMLW) and 197 to 217 (IITL…ASLI). A Zn(2+)-binding site is contributed by Glu226.

The protein belongs to the peptidase M48B family. Zn(2+) is required as a cofactor.

It localises to the cell membrane. In Streptococcus pyogenes serotype M28 (strain MGAS6180), this protein is Protease HtpX homolog.